Reading from the N-terminus, the 467-residue chain is Chromosomal replication initiator protein DnaA (467 aa).

Residues 1–85 (MTTTLWPQVL…LEVGEYAIES (85 aa)) form a domain I, interacts with DnaA modulators region. The tract at residues 85 to 130 (SFNEPENTSVPQPLRETKAEREAAEKAASSTSKKKSDSPPKKTIKH) is domain II. The tract at residues 87–129 (NEPENTSVPQPLRETKAEREAAEKAASSTSKKKSDSPPKKTIK) is disordered. Basic and acidic residues predominate over residues 99-109 (RETKAEREAAE). The segment at 131–347 (NLNTNFTFDT…GALKRVGAFA (217 aa)) is domain III, AAA+ region. ATP-binding residues include Gly175, Gly177, Lys178, and Thr179. Residues 348–467 (QFTQQLVTVD…FNSLIRIITN (120 aa)) form a domain IV, binds dsDNA region.

The protein belongs to the DnaA family. In terms of assembly, oligomerizes as a right-handed, spiral filament on DNA at oriC.

The protein localises to the cytoplasm. Functionally, plays an essential role in the initiation and regulation of chromosomal replication. ATP-DnaA binds to the origin of replication (oriC) to initiate formation of the DNA replication initiation complex once per cell cycle. Binds the DnaA box (a 9 base pair repeat at the origin) and separates the double-stranded (ds)DNA. Forms a right-handed helical filament on oriC DNA; dsDNA binds to the exterior of the filament while single-stranded (ss)DNA is stabiized in the filament's interior. The ATP-DnaA-oriC complex binds and stabilizes one strand of the AT-rich DNA unwinding element (DUE), permitting loading of DNA polymerase. After initiation quickly degrades to an ADP-DnaA complex that is not apt for DNA replication. Binds acidic phospholipids. The sequence is that of Chromosomal replication initiator protein DnaA from Hydrogenovibrio crunogenus (strain DSM 25203 / XCL-2) (Thiomicrospira crunogena).